The primary structure comprises 146 residues: NADH-quinone oxidoreductase subunit A (146 aa).

The next 3 membrane-spanning stretches (helical) occupy residues 14 to 34, 68 to 88, and 96 to 116; these read FALF…GGFL, LVAM…AWAV, and IGFI…IYLV.

Belongs to the complex I subunit 3 family. In terms of assembly, NDH-1 is composed of 13 different subunits. Subunits NuoA, H, J, K, L, M, N constitute the membrane sector of the complex.

The protein localises to the cell inner membrane. The enzyme catalyses a quinone + NADH + 5 H(+)(in) = a quinol + NAD(+) + 4 H(+)(out). Functionally, NDH-1 shuttles electrons from NADH, via FMN and iron-sulfur (Fe-S) centers, to quinones in the respiratory chain. The immediate electron acceptor for the enzyme in this species is believed to be ubiquinone. Couples the redox reaction to proton translocation (for every two electrons transferred, four hydrogen ions are translocated across the cytoplasmic membrane), and thus conserves the redox energy in a proton gradient. In Pectobacterium atrosepticum (strain SCRI 1043 / ATCC BAA-672) (Erwinia carotovora subsp. atroseptica), this protein is NADH-quinone oxidoreductase subunit A.